The sequence spans 332 residues: UPF0194 membrane protein YbhG (332 aa).

Residues 1 to 16 form the signal peptide; that stretch reads MMKKPVVIGLAVVVLA. A coiled-coil region spans residues 108–209; it reads EEIAQAAAAV…LNLQDSTLIA (102 aa).

It belongs to the UPF0194 family.

The protein localises to the periplasm. The protein is UPF0194 membrane protein YbhG of Escherichia coli O127:H6 (strain E2348/69 / EPEC).